Reading from the N-terminus, the 130-residue chain is MTQEFNYGTGRRKTATARTRLYSGTGKIVVNGRPYDEYFPRKSLQMIIRQPLALTKNVESFDIHVNVQGGGVRGQAEAVRHGISRALLEVDVEMRSSLKRAGFLTRDARKKERKKYGQRAARARFQYSKR.

Positions 109 to 130 are disordered; that stretch reads RKKERKKYGQRAARARFQYSKR.

The protein belongs to the universal ribosomal protein uS9 family.

This is Small ribosomal subunit protein uS9 from Oleidesulfovibrio alaskensis (strain ATCC BAA-1058 / DSM 17464 / G20) (Desulfovibrio alaskensis).